A 296-amino-acid polypeptide reads, in one-letter code: Acetylglutamate kinase (296 aa).

Residues 69-70, Arg91, and Asn193 contribute to the substrate site; that span reads GG.

This sequence belongs to the acetylglutamate kinase family. ArgB subfamily.

It localises to the cytoplasm. The enzyme catalyses N-acetyl-L-glutamate + ATP = N-acetyl-L-glutamyl 5-phosphate + ADP. It functions in the pathway amino-acid biosynthesis; L-arginine biosynthesis; N(2)-acetyl-L-ornithine from L-glutamate: step 2/4. Catalyzes the ATP-dependent phosphorylation of N-acetyl-L-glutamate. The protein is Acetylglutamate kinase of Verminephrobacter eiseniae (strain EF01-2).